The chain runs to 239 residues: 1-(5-phosphoribosyl)-5-[(5-phosphoribosylamino)methylideneamino] imidazole-4-carboxamide isomerase (239 aa).

Asp8 (proton acceptor) is an active-site residue. Asp129 acts as the Proton donor in catalysis.

This sequence belongs to the HisA/HisF family.

It localises to the cytoplasm. It carries out the reaction 1-(5-phospho-beta-D-ribosyl)-5-[(5-phospho-beta-D-ribosylamino)methylideneamino]imidazole-4-carboxamide = 5-[(5-phospho-1-deoxy-D-ribulos-1-ylimino)methylamino]-1-(5-phospho-beta-D-ribosyl)imidazole-4-carboxamide. It functions in the pathway amino-acid biosynthesis; L-histidine biosynthesis; L-histidine from 5-phospho-alpha-D-ribose 1-diphosphate: step 4/9. This Bacillus thuringiensis subsp. konkukian (strain 97-27) protein is 1-(5-phosphoribosyl)-5-[(5-phosphoribosylamino)methylideneamino] imidazole-4-carboxamide isomerase.